A 160-amino-acid chain; its full sequence is GPI-anchored protein LLG3 (160 aa).

Positions 1–23 are cleaved as a signal peptide; the sequence is MKITHHCLVSLLSILLLSGFAFS. An N-linked (GlcNAc...) asparagine glycan is attached at N56. S137 is lipidated: GPI-anchor amidated serine. A propeptide spans 138–160 (removed in mature form); the sequence is HASIPLVSTHVLLITVSILFHLF.

Expressed in pollen, pollen tubes, sporophytic pistil tissues, in the early stages of female gametophyte development, and in unfertilized, mature ovules.

It is found in the cell membrane. In Arabidopsis thaliana (Mouse-ear cress), this protein is GPI-anchored protein LLG3.